The primary structure comprises 389 residues: GTPase Obg (389 aa).

Residues 1–159 (MKFVDEAVIK…RELRLELLLL (159 aa)) enclose the Obg domain. The 174-residue stretch at 160–333 (ADVGLLGMPN…LAEKLFDFIK (174 aa)) folds into the OBG-type G domain. GTP is bound by residues 166-173 (GMPNAGKS), 191-195 (FTTLV), 213-216 (DIPG), 283-286 (NKTD), and 314-316 (SAA). 2 residues coordinate Mg(2+): Ser173 and Thr193.

It belongs to the TRAFAC class OBG-HflX-like GTPase superfamily. OBG GTPase family. As to quaternary structure, monomer. Mg(2+) serves as cofactor.

The protein resides in the cytoplasm. Functionally, an essential GTPase which binds GTP, GDP and possibly (p)ppGpp with moderate affinity, with high nucleotide exchange rates and a fairly low GTP hydrolysis rate. Plays a role in control of the cell cycle, stress response, ribosome biogenesis and in those bacteria that undergo differentiation, in morphogenesis control. In Shewanella amazonensis (strain ATCC BAA-1098 / SB2B), this protein is GTPase Obg.